Reading from the N-terminus, the 912-residue chain is DNA ligase 4 (912 aa).

12 residues coordinate ATP: glutamate 276, threonine 277, lysine 278, leucine 279, arginine 283, glutamate 336, lysine 350, phenylalanine 372, glutamate 432, lysine 437, lysine 454, and lysine 456. The active-site N6-AMP-lysine intermediate is the lysine 278. A Mg(2+)-binding site is contributed by glutamate 336. Glutamate 432 provides a ligand contact to Mg(2+). The required for catalytic activity stretch occupies residues 615–625 (LASKHLYIDEY). 2 consecutive BRCT domains span residues 659-748 (KVSS…PAFM) and 809-912 (CKLC…QFLI).

This sequence belongs to the ATP-dependent DNA ligase family. As to quaternary structure, interacts with XRCC4; the LIG4-XRCC4 subcomplex has a 1:2 stoichiometry. Component of the core long-range non-homologous end joining (NHEJ) complex (also named DNA-PK complex) composed of PRKDC, LIG4, XRCC4, XRCC6/Ku70, XRCC5/Ku86 and NHEJ1/XLF. Additional component of the NHEJ complex includes PAXX. Following autophosphorylation, PRKDC dissociates from DNA, leading to formation of the short-range NHEJ complex, composed of LIG4, XRCC4, XRCC6/Ku70, XRCC5/Ku86 and NHEJ1/XLF. Requires Mg(2+) as cofactor.

The protein localises to the nucleus. It carries out the reaction ATP + (deoxyribonucleotide)n-3'-hydroxyl + 5'-phospho-(deoxyribonucleotide)m = (deoxyribonucleotide)n+m + AMP + diphosphate.. DNA ligase involved in DNA non-homologous end joining (NHEJ); required for double-strand break (DSB) repair and V(D)J recombination. Catalyzes the NHEJ ligation step of the broken DNA during DSB repair by resealing the DNA breaks after the gap filling is completed. Joins single-strand breaks in a double-stranded polydeoxynucleotide in an ATP-dependent reaction. LIG4 is mechanistically flexible: it can ligate nicks as well as compatible DNA overhangs alone, while in the presence of XRCC4, it can ligate ends with 2-nucleotides (nt) microhomology and 1-nt gaps. Forms a subcomplex with XRCC4; the LIG4-XRCC4 subcomplex is responsible for the NHEJ ligation step and XRCC4 enhances the joining activity of LIG4. This is DNA ligase 4 from Gallus gallus (Chicken).